The sequence spans 480 residues: MLNFGASLQQASEGKMELISEKSKEGAHPWDKAEQSDFEAVEALMSMSCDWKSHFKKYLENRPVTPVSDTSEEDSLLPGTPDLQTVPAFCLTPPYSPSDFEPSQGSNLTAPAPPTGHFRSLSDAAKPPSIAPFKEEEKSPLAAPPLPKAQATSVIRHTADAQLCNHQSCPVKAASILNYQDNSFRRRTHINVEATRKNIPCAAVSPNRPKPEPSTAANGAEKAGTAPYDFAVPSSETVICRSSQPAPTSPVQKSVLMSSPTVSTGGVPPLPVICQMVPLPANNSLVTTVVPSSPPSQPPAVCSPVLFMGTQVPKGTVMFVVPQPVVQSPKPPVVSPNGTRLSPIAPAPGFSPSAARVTPQIDSSRVRSHICSHPGCGKTYFKSSHLKAHVRTHTGEKPFSCSWKGCERRFARSDELSRHRRTHTGEKKFACPMCDRRFMRSDHLTKHARRHLSAKKLPNWQMEVSKLNDIALPPATASAQ.

Polar residues predominate over residues Met-1–Ser-12. Disordered stretches follow at residues Met-1–Lys-32, Val-64–Leu-83, and Pro-97–Leu-146. Positions Gly-14–Lys-32 are enriched in basic and acidic residues. Ser-183 carries the phosphoserine modification. Residues Ala-202 to Lys-222 form a disordered region. Ser-249 carries the phosphoserine modification. C2H2-type zinc fingers lie at residues His-369–His-393, Phe-399–His-423, and Phe-429–His-451.

Belongs to the Sp1 C2H2-type zinc-finger protein family. Ubiquitinated; mediated by SIAH1 and leading to its subsequent proteasomal degradation.

It localises to the nucleus. Functionally, transcriptional repressor which binds to the consensus sequence 5'-GGTGTG-3'. Regulates the circadian expression of genes involved in lipogenesis, gluconeogenesis, and glycolysis in the liver. Represses the expression of PCK2, a rate-limiting step enzyme of gluconeogenesis. May play a role in the cell cycle regulation. Plays a role in the regulation of the circadian clock; binds to the GC box sequence in the promoter of the core clock component ARTNL/BMAL1 and represses its transcriptional activity. This Rattus norvegicus (Rat) protein is Krueppel-like factor 10 (Klf10).